Consider the following 107-residue polypeptide: Iron-sulfur cluster assembly protein CyaY (107 aa).

Belongs to the frataxin family.

Its function is as follows. Involved in iron-sulfur (Fe-S) cluster assembly. May act as a regulator of Fe-S biogenesis. The polypeptide is Iron-sulfur cluster assembly protein CyaY (Yersinia intermedia).